A 283-amino-acid chain; its full sequence is Homeobox-leucine zipper protein HAT2 (283 aa).

The disordered stretch occupies residues 64–134 (VNCEEDTGVS…GETSRKKLRL (71 aa)). The segment covering 73 to 84 (SSPNSTISSTIS) has biased composition (low complexity). A DNA-binding region (homeobox) is located at residues 127 to 186 (TSRKKLRLSKDQSAFLEETFKEHNTLNPKQKLALAKKLNLTARQVEVWFQNRRARTKLKQ). Positions 194–215 (LKRCVEKLTEENRRLQKEAMEL) are leucine-zipper.

This sequence belongs to the HD-ZIP homeobox family. Class II subfamily. In terms of assembly, interacts with RBR1.

The protein resides in the nucleus. Functionally, probable transcription factor that plays a role in auxin-mediated morphogenesis. Negatively regulates lateral root elongation. This Arabidopsis thaliana (Mouse-ear cress) protein is Homeobox-leucine zipper protein HAT2 (HAT2).